The primary structure comprises 346 residues: Elongation factor 1-alpha (346 aa).

The tr-type G domain maps to 1–127 (GTSQADVALL…DNVEPPKRPS (127 aa)). 49–52 (NKMD) lines the GTP pocket.

The protein belongs to the TRAFAC class translation factor GTPase superfamily. Classic translation factor GTPase family. EF-Tu/EF-1A subfamily.

The protein localises to the cytoplasm. In terms of biological role, this protein promotes the GTP-dependent binding of aminoacyl-tRNA to the A-site of ribosomes during protein biosynthesis. This Eimeria bovis protein is Elongation factor 1-alpha.